The primary structure comprises 375 residues: Alcohol dehydrogenase 1 (375 aa).

Serine 2 carries the post-translational modification N-acetylserine. Zn(2+) contacts are provided by cysteine 47, histidine 68, cysteine 98, cysteine 101, cysteine 104, cysteine 112, and cysteine 175. NAD(+) is bound by residues glycine 200–glycine 205, aspartate 224, and lysine 229. Lysine 234 bears the N6-succinyllysine mark. Valine 293–valine 295 contacts NAD(+). Lysine 340 bears the N6-succinyllysine mark. Position 370 (arginine 370) interacts with NAD(+).

The protein belongs to the zinc-containing alcohol dehydrogenase family. Class-I subfamily. It depends on Zn(2+) as a cofactor.

The protein resides in the cytoplasm. It carries out the reaction a primary alcohol + NAD(+) = an aldehyde + NADH + H(+). The catalysed reaction is a secondary alcohol + NAD(+) = a ketone + NADH + H(+). This is Alcohol dehydrogenase 1 (ADH1) from Peromyscus maniculatus (North American deer mouse).